We begin with the raw amino-acid sequence, 268 residues long: Tetraspanin-5 (268 aa).

At Met-1–Tyr-17 the chain is on the cytoplasmic side. Residues Phe-18–Leu-38 traverse the membrane as a helical segment. Over Trp-39–Pro-61 the chain is Extracellular. Residue Asn-49 is glycosylated (N-linked (GlcNAc...) asparagine). Residues Val-62–Gly-82 traverse the membrane as a helical segment. Over Ala-83–Lys-92 the chain is Cytoplasmic. A helical membrane pass occupies residues Phe-93–Phe-113. Over Val-114 to Asn-232 the chain is Extracellular. 4 cysteine pairs are disulfide-bonded: Cys-153–Cys-221, Cys-154–Cys-186, Cys-170–Cys-180, and Cys-187–Cys-200. 2 N-linked (GlcNAc...) asparagine glycosylation sites follow: Asn-169 and Asn-174. Asn-232 carries an N-linked (GlcNAc...) asparagine glycan. The helical transmembrane segment at Leu-233–Leu-253 threads the bilayer. At Ala-254–Trp-268 the chain is on the cytoplasmic side.

Belongs to the tetraspanin (TM4SF) family. In terms of assembly, interacts with ADAM10; the interaction influences ADAM10 substrate specificity, endocytosis and turnover. Palmitoylated.

Its subcellular location is the cell membrane. Part of TspanC8 subgroup, composed of 6 members that interact with the transmembrane metalloprotease ADAM10. This interaction is required for ADAM10 exit from the endoplasmic reticulum and for enzymatic maturation and trafficking to the cell surface as well as substrate specificity. Different TspanC8/ADAM10 complexes have distinct substrates. Promotes ADAM10-mediated cleavage of CD44. Seems to regulate VE-cadherin expression in endothelial cells probably through interaction with ADAM10, promoting leukocyte transmigration. This is Tetraspanin-5 from Homo sapiens (Human).